We begin with the raw amino-acid sequence, 394 residues long: UPF0229 protein RBAM_009260 (394 aa).

It belongs to the UPF0229 family.

This Bacillus velezensis (strain DSM 23117 / BGSC 10A6 / LMG 26770 / FZB42) (Bacillus amyloliquefaciens subsp. plantarum) protein is UPF0229 protein RBAM_009260.